The sequence spans 367 residues: Mitochondrial GTPase 1 (367 aa).

The region spanning 42–228 (LKTFEKLLPQ…LIDTPGIGVP (187 aa)) is the CP-type G domain. Residues 89–92 (TRKD), 160–165 (NVGKST), and glycine 224 each bind GTP.

This sequence belongs to the TRAFAC class YlqF/YawG GTPase family. MTG1 subfamily.

The protein localises to the mitochondrion inner membrane. Mitochondrial GTPase involved in assembly of the large ribosomal subunit. Plays a role in expression of the mitochondrial translational machinery. The sequence is that of Mitochondrial GTPase 1 (MTG1) from Saccharomyces cerevisiae (strain ATCC 204508 / S288c) (Baker's yeast).